Consider the following 370-residue polypeptide: Mitochondrial carrier protein SCaMC-3L (370 aa).

Solcar repeat units follow at residues 90-176 (EALW…CKNY), 184-269 (PPFQ…LQCF), and 280-367 (PSGL…MKKT). The next 6 helical transmembrane spans lie at 96–113 (LLSG…TAPL), 151–170 (GNGI…FSVF), 194–207 (SLAV…INPM), 245–263 (YLPN…LAVY), 282–306 (GLVS…LTLV), and 342–361 (GMTP…YVVY).

This sequence belongs to the mitochondrial carrier (TC 2.A.29) family.

The protein resides in the mitochondrion inner membrane. The enzyme catalyses Mg(2+)(out) + phosphate(in) + ATP(out) = Mg(2+)(in) + phosphate(out) + ATP(in). It carries out the reaction ADP(out) + phosphate(in) + H(+)(out) = ADP(in) + phosphate(out) + H(+)(in). Functionally, calcium-independent ATP-Mg/Pi exchanger that catalyzes the electroneutral exchange of Mg-ATP or free ADP against an hydrogenphosphate and participates in the net transport of adenine nucleotides across the mitochondria inner membrane. In Homo sapiens (Human), this protein is Mitochondrial carrier protein SCaMC-3L.